Reading from the N-terminus, the 1233-residue chain is uncharacterized protein (1233 aa).

Disordered stretches follow at residues 1-39 (MVES…PSTN), 65-116 (QELS…DAIS), 160-211 (AEGT…TDLS), 250-577 (EKMD…DAPR), 594-825 (DLEV…NSEK), 851-872 (NKEN…NSEK), and 902-955 (EDVE…ENSK). The segment covering 72–83 (KSSKLKGHKKKN) has biased composition (basic residues). S180 carries the phosphoserine modification. Over residues 183-199 (TRRKKNKKKKTTNRRGR) the composition is skewed to basic residues. The span at 201 to 211 (SSNPADTTDLS) shows a compositional bias: polar residues. Composition is skewed to basic and acidic residues over residues 250–280 (EKMD…ETSS) and 287–300 (NEEK…REEN). The span at 329–345 (GQASTKDVESESLTKNG) shows a compositional bias: polar residues. Basic and acidic residues-rich tracts occupy residues 349 to 370 (KENE…DRDG) and 379 to 408 (NQKE…ELSV). Positions 409 to 422 (NHENNMSHNFNAAG) are enriched in polar residues. Residue S462 is modified to Phosphoserine. The segment covering 466-478 (EKEEEEEEEEEEN) has biased composition (acidic residues). Basic and acidic residues-rich tracts occupy residues 484–497 (VKKE…EAVR), 508–527 (STSK…EAGE), 594–622 (DLEV…DKIA), 631–672 (EDMK…KTPE), and 684–711 (RPED…DVKP). S523 is modified (phosphoserine). Polar residues predominate over residues 728-739 (QRVQISTEQAET). The span at 753-783 (FKEEEKPKRFEITQEGDKITGKDTNHEHGEA) shows a compositional bias: basic and acidic residues. Residues 855-868 (EDVEVDTEEDAEVE) show a composition bias toward acidic residues. T861 bears the Phosphothreonine mark. 2 stretches are compositionally biased toward basic and acidic residues: residues 910–920 (SKEDIETKCSE) and 935–948 (EVSK…TKED). S975 is modified (phosphoserine). 2 disordered regions span residues 984–1071 (LPEL…PKKA) and 1109–1128 (KDST…KPQD). A compositionally biased stretch (basic and acidic residues) spans 986–999 (ELEKQDIKDNKGED). A phosphoserine mark is found at S1037 and S1046. Basic and acidic residues-rich tracts occupy residues 1062 to 1071 (QSTRENPKKA) and 1118 to 1127 (QSKKNNDKPQ). The Glutaredoxin domain maps to 1132 to 1233 (TSEIRKLNEK…KLRELIYDTI (102 aa)).

This is an uncharacterized protein from Saccharomyces cerevisiae (strain ATCC 204508 / S288c) (Baker's yeast).